Reading from the N-terminus, the 242-residue chain is ATP synthase subunit a (242 aa).

Transmembrane regions (helical) follow at residues serine 29–tyrosine 49, phenylalanine 84–threonine 104, isoleucine 114–valine 134, phenylalanine 140–isoleucine 160, methionine 181–leucine 201, and phenylalanine 203–glutamine 223.

Belongs to the ATPase A chain family. As to quaternary structure, F-type ATPases have 2 components, CF(1) - the catalytic core - and CF(0) - the membrane proton channel. CF(1) has five subunits: alpha(3), beta(3), gamma(1), delta(1), epsilon(1). CF(0) has three main subunits: a(1), b(2) and c(9-12). The alpha and beta chains form an alternating ring which encloses part of the gamma chain. CF(1) is attached to CF(0) by a central stalk formed by the gamma and epsilon chains, while a peripheral stalk is formed by the delta and b chains.

It localises to the cell membrane. Its function is as follows. Key component of the proton channel; it plays a direct role in the translocation of protons across the membrane. The polypeptide is ATP synthase subunit a (Rickettsia africae (strain ESF-5)).